A 411-amino-acid polypeptide reads, in one-letter code: Glutamate dehydrogenase 2, mitochondrial (411 aa).

Residues 1-18 constitute a mitochondrion transit peptide; that stretch reads MNALAATSRNFRQAARLL. Residue Lys-102 is part of the active site.

It belongs to the Glu/Leu/Phe/Val dehydrogenases family. As to expression, expressed in roots. Expressed ubiquitously in various tissues.

Its subcellular location is the mitochondrion. The catalysed reaction is L-glutamate + NAD(+) + H2O = 2-oxoglutarate + NH4(+) + NADH + H(+). The enzyme catalyses L-glutamate + NADP(+) + H2O = 2-oxoglutarate + NH4(+) + NADPH + H(+). The polypeptide is Glutamate dehydrogenase 2, mitochondrial (GDH2) (Oryza sativa subsp. japonica (Rice)).